Reading from the N-terminus, the 318-residue chain is L-lactate dehydrogenase (318 aa).

Residues V17, D38, K43, Y69, and 83-84 contribute to the NAD(+) site; that span reads GA. 2 residues coordinate substrate: Q86 and R92. NAD(+) is bound by residues S105, 122-124, and S147; that span reads ATN. A substrate-binding site is contributed by 124–127; that stretch reads NPVD. 152–155 provides a ligand contact to substrate; that stretch reads DTAR. Beta-D-fructose 1,6-bisphosphate-binding residues include K157 and H172. H179 functions as the Proton acceptor in the catalytic mechanism. Y223 is modified (phosphotyrosine). T232 is a substrate binding site.

This sequence belongs to the LDH/MDH superfamily. LDH family. Homotetramer.

The protein resides in the cytoplasm. The catalysed reaction is (S)-lactate + NAD(+) = pyruvate + NADH + H(+). It functions in the pathway fermentation; pyruvate fermentation to lactate; (S)-lactate from pyruvate: step 1/1. Allosterically activated by fructose 1,6-bisphosphate (FBP). Its function is as follows. Catalyzes the conversion of lactate to pyruvate. The sequence is that of L-lactate dehydrogenase from Staphylococcus saprophyticus subsp. saprophyticus (strain ATCC 15305 / DSM 20229 / NCIMB 8711 / NCTC 7292 / S-41).